The primary structure comprises 132 residues: Fluoride-specific ion channel FluC 2 (132 aa).

A run of 4 helical transmembrane segments spans residues 8-28, 41-61, 66-86, and 96-116; these read LQLE…GALL, LLVN…PAAP, LLGI…LAAV, and AALG…ALGF. The Na(+) site is built by Gly73 and Thr76.

The protein belongs to the fluoride channel Fluc/FEX (TC 1.A.43) family.

Its subcellular location is the cell inner membrane. The catalysed reaction is fluoride(in) = fluoride(out). Na(+) is not transported, but it plays an essential structural role and its presence is essential for fluoride channel function. Functionally, fluoride-specific ion channel. Important for reducing fluoride concentration in the cell, thus reducing its toxicity. The chain is Fluoride-specific ion channel FluC 2 from Synechococcus sp. (strain CC9605).